A 547-amino-acid polypeptide reads, in one-letter code: CDK5RAP1-like protein (547 aa).

Positions 79-194 (RTVCYVTYGC…LPRLVAVAAG (116 aa)) constitute an MTTase N-terminal domain. [4Fe-4S] cluster is bound by residues Cys-88, Cys-124, Cys-157, Cys-232, Cys-236, and Cys-239. The Radical SAM core domain maps to 218–475 (DSASKTAFIS…TTVFREEALK (258 aa)). The TRAM domain occupies 478-543 (QALIGSEQTV…SQTLKAQLIG (66 aa)).

This sequence belongs to the methylthiotransferase family. MiaB subfamily. It depends on [4Fe-4S] cluster as a cofactor.

Functionally, potential regulator of CDK5 activity. In Caenorhabditis elegans, this protein is CDK5RAP1-like protein.